A 319-amino-acid polypeptide reads, in one-letter code: Phosphoribosylformylglycinamidine cyclo-ligase (319 aa).

It belongs to the AIR synthase family.

It localises to the cytoplasm. It catalyses the reaction 2-formamido-N(1)-(5-O-phospho-beta-D-ribosyl)acetamidine + ATP = 5-amino-1-(5-phospho-beta-D-ribosyl)imidazole + ADP + phosphate + H(+). It functions in the pathway purine metabolism; IMP biosynthesis via de novo pathway; 5-amino-1-(5-phospho-D-ribosyl)imidazole from N(2)-formyl-N(1)-(5-phospho-D-ribosyl)glycinamide: step 2/2. The chain is Phosphoribosylformylglycinamidine cyclo-ligase from Sulfurisphaera tokodaii (strain DSM 16993 / JCM 10545 / NBRC 100140 / 7) (Sulfolobus tokodaii).